A 125-amino-acid polypeptide reads, in one-letter code: MFFDTKVLNYPTIHKSISMASTMQRTSSSAASNERQLSQLQRRAPSLMIKPTSFSNWNVAIPLLSPLAPSLTSSFDQSHVPPPQNKTEIPVEEEVKKTPVFKKWQHPASPFCYEPTTFVPPFIQV.

The transit peptide at Met-1–Ser-46 directs the protein to the chloroplast.

Its subcellular location is the plastid. The protein resides in the chloroplast. This is an uncharacterized protein from Arabidopsis thaliana (Mouse-ear cress).